The chain runs to 68 residues: Lividin-1 (68 aa).

Residues 1 to 22 (MFTLKKSLLLLFFLGTINLSLC) form the signal peptide. The propeptide occupies 23-42 (QEERNADEEERRDERNVEVE). A disulfide bond links C62 and C68.

Expressed by the skin glands.

The protein resides in the secreted. Its function is as follows. Antimicrobial peptide. In Odorrana livida (Green mountain frog), this protein is Lividin-1.